The sequence spans 418 residues: Protein-lysine N-trimethyltransferase SMYD5 (418 aa).

The region spanning 21-352 is the SET domain; sequence VSVEVRFVSS…PGEEICISYL (332 aa). Residues 98-136 form an MYND-type zinc finger; it reads PELCTVRKDLHQNCPHCQVMYCSAECRLAATEQYHQVLC. Tyr351 provides a ligand contact to S-adenosyl-L-methionine. The disordered stretch occupies residues 385-418; the sequence is ADEPNVTSEEEEEEEEEEEGEPEDAELGDEMTDV.

It belongs to the class V-like SAM-binding methyltransferase superfamily. As to quaternary structure, interacts with the N-CoR complex. Interacts with EHMT2 and CBX5. In terms of processing, ubiquitinated and degradaed by the proteasome in response to mild hypothermia (32 degrees Celsius), relieving repression of the SP1 gene.

It is found in the cytoplasm. It catalyses the reaction L-lysyl-[protein] + 3 S-adenosyl-L-methionine = N(6),N(6),N(6)-trimethyl-L-lysyl-[protein] + 3 S-adenosyl-L-homocysteine + 3 H(+). It carries out the reaction L-lysyl(20)-[histone H4] + 3 S-adenosyl-L-methionine = N(6),N(6),N(6)-trimethyl-L-lysyl(20)-[histone H4] + 3 S-adenosyl-L-homocysteine + 3 H(+). The enzyme catalyses L-lysyl(36)-[histone H3] + 3 S-adenosyl-L-methionine = N(6),N(6),N(6)-trimethyl-L-lysyl(36)-[histone H3] + 3 S-adenosyl-L-homocysteine + 3 H(+). Functionally, protein-lysine N-trimethyltransferase that specifically catalyzes trimethylation of 'Lys-22' of the RPL40/eL40 subunit of the 60S ribosome, thereby promoting translation elongation and protein synthesis. May also act as a histone methyltransferase in the context of histone octamers, but not on nucleosome substrates: trimethylates 'Lys-36' of histone H3 and 'Lys-20' of histone H4 to form H3K36me3 and H4K20me3, respectively. The histone methyltransferase activity, which is independent of its SET domain, is however unsure in vivo. In association with the NCoR corepressor complex, involved in the repression of toll-like receptor 4 (TLR4)-target inflammatory genes in macrophages, possibly by catalyzing the formation of H4K20me3 at the gene promoters. Plays an important role in embryonic stem (ES) cell self-renewal and differentiation. Maintains genome stability of ES cells during differentiation through regulation of heterochromatin formation and repression of endogenous repetitive DNA elements by promoting H4K20me3 marks. Acts as a regulator of the hypothermia response: its degradation in response to mild hypothermia relieves the formation of H3K36me3 at gene promoters, allowing expression of the neuroprotective gene SP1. The sequence is that of Protein-lysine N-trimethyltransferase SMYD5 from Homo sapiens (Human).